The sequence spans 448 residues: Guanine deaminase (448 aa).

Residues His74 and His76 each contribute to the Zn(2+) site. Substrate is bound by residues 76–79 (HAPQ), 204–205 (RF), 231–234 (HISE), and Asp319. Zn(2+)-binding residues include His231 and Asp319.

This sequence belongs to the metallo-dependent hydrolases superfamily. ATZ/TRZ family. Zn(2+) serves as cofactor.

The enzyme catalyses guanine + H2O + H(+) = xanthine + NH4(+). It functions in the pathway purine metabolism; guanine degradation; xanthine from guanine: step 1/1. Strongly inhibited by p-chloromercuribenzoate (PCMB). Potassium cyanide (KCN) strongly inhibits activity towards 7,8-dihydropterin but has almost no effect on activity towards guanine. Pterin inhibits activity towards guanine but has little effect on activity towards 7,8-dihydropterin. Its function is as follows. Catalyzes the hydrolytic deamination of guanine, producing xanthine and ammonia. Also has 7,8-dihydropterin deaminase activity, which plays a role in synthesis of the red eye pigment aurodrosopterin. The protein is Guanine deaminase of Drosophila melanogaster (Fruit fly).